We begin with the raw amino-acid sequence, 174 residues long: Large ribosomal subunit protein uL10 (174 aa).

The protein belongs to the universal ribosomal protein uL10 family. In terms of assembly, part of the ribosomal stalk of the 50S ribosomal subunit. The N-terminus interacts with L11 and the large rRNA to form the base of the stalk. The C-terminus forms an elongated spine to which L12 dimers bind in a sequential fashion forming a multimeric L10(L12)X complex.

In terms of biological role, forms part of the ribosomal stalk, playing a central role in the interaction of the ribosome with GTP-bound translation factors. This is Large ribosomal subunit protein uL10 from Geobacter metallireducens (strain ATCC 53774 / DSM 7210 / GS-15).